The primary structure comprises 512 residues: ATP synthase subunit alpha (512 aa).

170 to 177 contributes to the ATP binding site; sequence GDRQTGKT.

This sequence belongs to the ATPase alpha/beta chains family. In terms of assembly, F-type ATPases have 2 components, CF(1) - the catalytic core - and CF(0) - the membrane proton channel. CF(1) has five subunits: alpha(3), beta(3), gamma(1), delta(1), epsilon(1). CF(0) has three main subunits: a(1), b(2) and c(9-12). The alpha and beta chains form an alternating ring which encloses part of the gamma chain. CF(1) is attached to CF(0) by a central stalk formed by the gamma and epsilon chains, while a peripheral stalk is formed by the delta and b chains.

It localises to the cell inner membrane. It carries out the reaction ATP + H2O + 4 H(+)(in) = ADP + phosphate + 5 H(+)(out). Functionally, produces ATP from ADP in the presence of a proton gradient across the membrane. The alpha chain is a regulatory subunit. The chain is ATP synthase subunit alpha from Solibacter usitatus (strain Ellin6076).